Here is a 676-residue protein sequence, read N- to C-terminus: Putative Xaa-Pro dipeptidyl-peptidase (676 aa).

Catalysis depends on charge relay system residues Ser224, Asp330, and His361. Residues 423 to 450 are disordered; sequence RPGTGTQAGVGTLGLRTGSGTETFTDDP.

It belongs to the peptidase S15 family.

It catalyses the reaction Hydrolyzes Xaa-Pro-|- bonds to release unblocked, N-terminal dipeptides from substrates including Ala-Pro-|-p-nitroanilide and (sequentially) Tyr-Pro-|-Phe-Pro-|-Gly-Pro-|-Ile.. This Streptomyces avermitilis (strain ATCC 31267 / DSM 46492 / JCM 5070 / NBRC 14893 / NCIMB 12804 / NRRL 8165 / MA-4680) protein is Putative Xaa-Pro dipeptidyl-peptidase.